Here is a 341-residue protein sequence, read N- to C-terminus: D-aspartate oxidase (341 aa).

Residues Asp-36, Lys-37, Thr-43, Ser-44, Met-50, Gly-307, Ile-311, and Ser-312 each coordinate FAD. Positions 339–341 (SNL) match the Microbody targeting signal motif.

This sequence belongs to the DAMOX/DASOX family. As to quaternary structure, monomer. Interacts with PEX5; the interaction is direct and required for localization of DDO to the peroxisome. Interacts with DAOA; the interaction is direct and increases the degradation rate of DDO. FAD is required as a cofactor. In terms of processing, may be S-nitrosylated. In terms of tissue distribution, expressed in epithelial cells of the proximal nephron tubules in the renal cortex (at protein level). In the brain, expressed in the frontal, temporal, and occipital lobes of the cortex, hippocampus, striatum, diencephalon, brainstem, cerebellum, spinal cord, plexus choroiderus and ependyma (at protein level). Expression is increased in the prefrontal cortex of schizophrenic patients. Levels are normal in the superior frontal gyrus of patients with Alzheimer's disease.

Its subcellular location is the peroxisome matrix. It is found in the cytoplasm. The protein resides in the cytosol. The enzyme catalyses D-aspartate + O2 + H2O = oxaloacetate + H2O2 + NH4(+). The catalysed reaction is D-glutamate + O2 + H2O = H2O2 + 2-oxoglutarate + NH4(+). With respect to regulation, inhibited by the benzodiazepine olanzapine. Inhibited by aminooxyacetic acid, thiolactomycin, malonate and meso-tartrate. Clozapine, haloperidol and chlorpromazine have no effect on activity. Not inhibited by sodium, potassium, magnesium, iron, calcium, cobalt, copper, nickel, manganese or zinc ions. Not inhibited by AMP, ADP, ATP, or cAMP. Not inhibited by pyridoxal 5'-phosphate. Selectively catalyzes the oxidative deamination of acidic amino acids. Suppresses the level of D-aspartate in the brain, an amino acid that can act as an agonist for glutamate receptors. Protects the organism from the toxicity of D-amino acids. May also function in the intestine. This is D-aspartate oxidase (DDO) from Homo sapiens (Human).